We begin with the raw amino-acid sequence, 81 residues long: ATP synthase subunit c, chloroplastic (81 aa).

2 consecutive transmembrane segments (helical) span residues 4-24 and 57-77; these read VISA…SIGP and LAFM…LLFA.

Belongs to the ATPase C chain family. As to quaternary structure, F-type ATPases have 2 components, F(1) - the catalytic core - and F(0) - the membrane proton channel. F(1) has five subunits: alpha(3), beta(3), gamma(1), delta(1), epsilon(1). F(0) has four main subunits: a(1), b(1), b'(1) and c(10-14). The alpha and beta chains form an alternating ring which encloses part of the gamma chain. F(1) is attached to F(0) by a central stalk formed by the gamma and epsilon chains, while a peripheral stalk is formed by the delta, b and b' chains.

It localises to the plastid. It is found in the chloroplast thylakoid membrane. F(1)F(0) ATP synthase produces ATP from ADP in the presence of a proton or sodium gradient. F-type ATPases consist of two structural domains, F(1) containing the extramembraneous catalytic core and F(0) containing the membrane proton channel, linked together by a central stalk and a peripheral stalk. During catalysis, ATP synthesis in the catalytic domain of F(1) is coupled via a rotary mechanism of the central stalk subunits to proton translocation. Its function is as follows. Key component of the F(0) channel; it plays a direct role in translocation across the membrane. A homomeric c-ring of between 10-14 subunits forms the central stalk rotor element with the F(1) delta and epsilon subunits. The sequence is that of ATP synthase subunit c, chloroplastic from Zygnema circumcarinatum (Green alga).